The chain runs to 380 residues: Chaperone protein DnaJ (380 aa).

The 66-residue stretch at 5–70 (DFYDVLGVNR…QKRAAYDQYG (66 aa)) folds into the J domain. A CR-type zinc finger spans residues 139-217 (GCEKQIRIPT…CHGAGRVKSQ (79 aa)). Zn(2+)-binding residues include Cys152, Cys155, Cys169, Cys172, Cys191, Cys194, Cys205, and Cys208. CXXCXGXG motif repeat units follow at residues 152–159 (CSHCHGSG), 169–176 (CPTCGGAG), 191–198 (CPTCHGSG), and 205–212 (CNICHGAG).

The protein belongs to the DnaJ family. In terms of assembly, homodimer. It depends on Zn(2+) as a cofactor.

Its subcellular location is the cytoplasm. Participates actively in the response to hyperosmotic and heat shock by preventing the aggregation of stress-denatured proteins and by disaggregating proteins, also in an autonomous, DnaK-independent fashion. Unfolded proteins bind initially to DnaJ; upon interaction with the DnaJ-bound protein, DnaK hydrolyzes its bound ATP, resulting in the formation of a stable complex. GrpE releases ADP from DnaK; ATP binding to DnaK triggers the release of the substrate protein, thus completing the reaction cycle. Several rounds of ATP-dependent interactions between DnaJ, DnaK and GrpE are required for fully efficient folding. Also involved, together with DnaK and GrpE, in the DNA replication of plasmids through activation of initiation proteins. This chain is Chaperone protein DnaJ, found in Laribacter hongkongensis (strain HLHK9).